The following is a 285-amino-acid chain: Elongation factor Ts (285 aa).

The tract at residues 82 to 85 is involved in Mg(2+) ion dislocation from EF-Tu; it reads TDFV.

It belongs to the EF-Ts family.

It is found in the cytoplasm. Associates with the EF-Tu.GDP complex and induces the exchange of GDP to GTP. It remains bound to the aminoacyl-tRNA.EF-Tu.GTP complex up to the GTP hydrolysis stage on the ribosome. This Sodalis glossinidius (strain morsitans) protein is Elongation factor Ts.